Reading from the N-terminus, the 792-residue chain is LPS-assembly protein LptD (792 aa).

Residues 1 to 22 (MYRVLRLLPLPLSVAISLSALA) form the signal peptide.

This sequence belongs to the LptD family. Component of the lipopolysaccharide transport and assembly complex. Interacts with LptE and LptA.

It localises to the cell outer membrane. Functionally, together with LptE, is involved in the assembly of lipopolysaccharide (LPS) at the surface of the outer membrane. The sequence is that of LPS-assembly protein LptD from Xylella fastidiosa (strain 9a5c).